The sequence spans 89 residues: Small ribosomal subunit protein uS15 (89 aa).

Basic and acidic residues predominate over residues 1–20; the sequence is MSITAERKAELIKTHARGEA. Positions 1-24 are disordered; it reads MSITAERKAELIKTHARGEADTGS.

It belongs to the universal ribosomal protein uS15 family. Part of the 30S ribosomal subunit. Forms a bridge to the 50S subunit in the 70S ribosome, contacting the 23S rRNA.

Functionally, one of the primary rRNA binding proteins, it binds directly to 16S rRNA where it helps nucleate assembly of the platform of the 30S subunit by binding and bridging several RNA helices of the 16S rRNA. Forms an intersubunit bridge (bridge B4) with the 23S rRNA of the 50S subunit in the ribosome. The chain is Small ribosomal subunit protein uS15 from Phenylobacterium zucineum (strain HLK1).